We begin with the raw amino-acid sequence, 460 residues long: UDP-N-acetylmuramate--L-alanine ligase (460 aa).

ATP is bound at residue 112-118 (GTHGKTT).

This sequence belongs to the MurCDEF family.

It is found in the cytoplasm. It carries out the reaction UDP-N-acetyl-alpha-D-muramate + L-alanine + ATP = UDP-N-acetyl-alpha-D-muramoyl-L-alanine + ADP + phosphate + H(+). Its pathway is cell wall biogenesis; peptidoglycan biosynthesis. Functionally, cell wall formation. The sequence is that of UDP-N-acetylmuramate--L-alanine ligase from Pelobacter propionicus (strain DSM 2379 / NBRC 103807 / OttBd1).